Here is a 248-residue protein sequence, read N- to C-terminus: DNA repair protein RecO (248 aa).

This sequence belongs to the RecO family.

Functionally, involved in DNA repair and RecF pathway recombination. The chain is DNA repair protein RecO from Streptomyces avermitilis (strain ATCC 31267 / DSM 46492 / JCM 5070 / NBRC 14893 / NCIMB 12804 / NRRL 8165 / MA-4680).